A 326-amino-acid polypeptide reads, in one-letter code: Light-induced protein, chloroplastic (326 aa).

Residues 1–63 constitute a chloroplast transit peptide; sequence MASISSLNQI…TNPKPKFTAQ (63 aa).

This sequence belongs to the LIPC family. As to quaternary structure, associates with the major light-harvesting antenna complex polypeptides of the PSII oxygen-evolving complex. Expressed at high levels in leaves and in the petals and anthers of flowers.

Its subcellular location is the plastid. It is found in the chloroplast thylakoid membrane. Its function is as follows. Required for normal plant growth. May be both photoprotective and play an ancillary role in photosynthesis. May structurally stabilize thylakoids during osmotic and oxidative stress. This chain is Light-induced protein, chloroplastic, found in Solanum demissum (Wild potato).